The chain runs to 312 residues: Small ribosomal subunit biogenesis GTPase RsgA (312 aa).

The 160-residue stretch at 86-245 (QSFLKRPAVA…LADTPGFNRP (160 aa)) folds into the CP-type G domain. Residues 135–138 (TKID) and 187–195 (GPSGVGKTS) contribute to the GTP site. 4 residues coordinate Zn(2+): cysteine 270, cysteine 275, histidine 277, and cysteine 283.

This sequence belongs to the TRAFAC class YlqF/YawG GTPase family. RsgA subfamily. In terms of assembly, monomer. Associates with 30S ribosomal subunit, binds 16S rRNA. It depends on Zn(2+) as a cofactor.

The protein resides in the cytoplasm. Functionally, one of several proteins that assist in the late maturation steps of the functional core of the 30S ribosomal subunit. Helps release RbfA from mature subunits. May play a role in the assembly of ribosomal proteins into the subunit. Circularly permuted GTPase that catalyzes slow GTP hydrolysis, GTPase activity is stimulated by the 30S ribosomal subunit. The sequence is that of Small ribosomal subunit biogenesis GTPase RsgA from Prochlorococcus marinus (strain NATL1A).